A 99-amino-acid polypeptide reads, in one-letter code: U11-barytoxin-Tl1a (99 aa).

The N-terminal stretch at 1–21 (MKTLVLVAVLGLASLYLLSYA) is a signal peptide. A propeptide spanning residues 22 to 50 (SEVQQISRDEEDFRALMASFGGIFDTEER) is cleaved from the precursor. 3 cysteine pairs are disulfide-bonded: Cys-57/Cys-71, Cys-64/Cys-76, and Cys-70/Cys-90.

Belongs to the neurotoxin 10 (Hwtx-1) family. 25 (ICK4) subfamily. As to expression, expressed by the venom gland.

The protein resides in the secreted. In terms of biological role, ion channel inhibitor. In Trittame loki (Brush-footed trapdoor spider), this protein is U11-barytoxin-Tl1a.